The sequence spans 291 residues: NAD kinase (291 aa).

Asp-73 acts as the Proton acceptor in catalysis. Residues 73–74, 147–148, Arg-175, Asp-177, 188–193, Ala-212, and Gln-246 contribute to the NAD(+) site; these read DG, ND, and TAYALS.

It belongs to the NAD kinase family. A divalent metal cation serves as cofactor.

It is found in the cytoplasm. The enzyme catalyses NAD(+) + ATP = ADP + NADP(+) + H(+). Involved in the regulation of the intracellular balance of NAD and NADP, and is a key enzyme in the biosynthesis of NADP. Catalyzes specifically the phosphorylation on 2'-hydroxyl of the adenosine moiety of NAD to yield NADP. This Polaromonas sp. (strain JS666 / ATCC BAA-500) protein is NAD kinase.